The primary structure comprises 198 residues: Probable chemoreceptor glutamine deamidase CheD (198 aa).

This sequence belongs to the CheD family.

The enzyme catalyses L-glutaminyl-[protein] + H2O = L-glutamyl-[protein] + NH4(+). Functionally, probably deamidates glutamine residues to glutamate on methyl-accepting chemotaxis receptors (MCPs), playing an important role in chemotaxis. The protein is Probable chemoreceptor glutamine deamidase CheD of Xanthomonas euvesicatoria pv. vesicatoria (strain 85-10) (Xanthomonas campestris pv. vesicatoria).